A 137-amino-acid chain; its full sequence is Small ribosomal subunit protein bS16 (137 aa).

Composition is skewed to basic and acidic residues over residues 80–99 (KSPEEAQKGGMRKGEFKRLQ) and 111–125 (VATEEPKAEEAKEAP). Positions 80–137 (KSPEEAQKGGMRKGEFKRLQAEQAAKAQKKAVATEEPKAEEAKEAPPAESQAAEGKEE) are disordered. Positions 126–137 (PAESQAAEGKEE) are enriched in low complexity.

It belongs to the bacterial ribosomal protein bS16 family.

In Coxiella burnetii (strain Dugway 5J108-111), this protein is Small ribosomal subunit protein bS16.